The following is a 331-amino-acid chain: MKISQAVGNACTVPASSVETHNNNPSKESKIIYLPGTNCEIKSQALLSAFTSYRVGGAAELYVAPRNIEALQASLRYAQEHNLRVTTLGAGSNLLVSDRGISGLVIATRHLRYTHFDHQTGQVTIAAGESIPSLAWEIAKLGWQGFEWAVGIPGTVGGAVVMNAGAHNSCIADILVSAQVLSPDGTVETLTPEELGYAYRTSLLQGSNRVVTQATFQLQPGFDPAYVTATTKQHKQMRLTTQPYNFPSCGSVFRNPKPYSAGWLIEQSGLKGYQIGGAQVAHLHANFIVNRGGAKANDIFCLIRHIQQEVQERWSILLEPEVKMLGEFQAA.

One can recognise an FAD-binding PCMH-type domain in the interval 54–221; the sequence is RVGGAAELYV…TQATFQLQPG (168 aa). Residue Arg200 is part of the active site. Ser251 functions as the Proton donor in the catalytic mechanism. Glu321 is a catalytic residue.

Belongs to the MurB family. It depends on FAD as a cofactor.

It is found in the cytoplasm. The catalysed reaction is UDP-N-acetyl-alpha-D-muramate + NADP(+) = UDP-N-acetyl-3-O-(1-carboxyvinyl)-alpha-D-glucosamine + NADPH + H(+). The protein operates within cell wall biogenesis; peptidoglycan biosynthesis. Functionally, cell wall formation. In Nostoc sp. (strain PCC 7120 / SAG 25.82 / UTEX 2576), this protein is UDP-N-acetylenolpyruvoylglucosamine reductase.